A 156-amino-acid polypeptide reads, in one-letter code: MSRRGVIQRRPVPPDSVYNSRLVSMIIRRIMRHGKKSLAARIVYDALKTIEERTGNNALEVFERAVRNATPLVEVKARRVGGATYQVPMEVRTERGTTLALRWLVQFSRSRPGRTMASRLANELLDAANESGNAIRKREETHRMAEANKAFAHYRY.

The protein belongs to the universal ribosomal protein uS7 family. In terms of assembly, part of the 30S ribosomal subunit. Contacts proteins S9 and S11.

In terms of biological role, one of the primary rRNA binding proteins, it binds directly to 16S rRNA where it nucleates assembly of the head domain of the 30S subunit. Is located at the subunit interface close to the decoding center, probably blocks exit of the E-site tRNA. This chain is Small ribosomal subunit protein uS7, found in Trichormus variabilis (strain ATCC 29413 / PCC 7937) (Anabaena variabilis).